The primary structure comprises 53 residues: ATP synthase protein 8 (53 aa).

Residues 10-30 (IMVFLVSMALLWAIMTMVFFL) traverse the membrane as a helical segment.

Belongs to the ATPase protein 8 family. F-type ATPases have 2 components, CF(1) - the catalytic core - and CF(0) - the membrane proton channel.

It localises to the mitochondrion membrane. Functionally, mitochondrial membrane ATP synthase (F(1)F(0) ATP synthase or Complex V) produces ATP from ADP in the presence of a proton gradient across the membrane which is generated by electron transport complexes of the respiratory chain. F-type ATPases consist of two structural domains, F(1) - containing the extramembraneous catalytic core and F(0) - containing the membrane proton channel, linked together by a central stalk and a peripheral stalk. During catalysis, ATP synthesis in the catalytic domain of F(1) is coupled via a rotary mechanism of the central stalk subunits to proton translocation. Part of the complex F(0) domain. Minor subunit located with subunit a in the membrane. In Artemia franciscana (Brine shrimp), this protein is ATP synthase protein 8 (MT-ATP8).